Consider the following 427-residue polypeptide: 3-phosphoshikimate 1-carboxyvinyltransferase (427 aa).

3-phosphoshikimate contacts are provided by Lys20, Ser21, and Arg25. Residue Lys20 coordinates phosphoenolpyruvate. 2 residues coordinate phosphoenolpyruvate: Gly92 and Arg120. 3-phosphoshikimate-binding residues include Ser166, Gln168, Asp312, and Lys339. Residue Gln168 participates in phosphoenolpyruvate binding. Asp312 acts as the Proton acceptor in catalysis. Phosphoenolpyruvate is bound by residues Arg343 and Arg385.

It belongs to the EPSP synthase family. In terms of assembly, monomer.

The protein localises to the cytoplasm. The catalysed reaction is 3-phosphoshikimate + phosphoenolpyruvate = 5-O-(1-carboxyvinyl)-3-phosphoshikimate + phosphate. It functions in the pathway metabolic intermediate biosynthesis; chorismate biosynthesis; chorismate from D-erythrose 4-phosphate and phosphoenolpyruvate: step 6/7. Functionally, catalyzes the transfer of the enolpyruvyl moiety of phosphoenolpyruvate (PEP) to the 5-hydroxyl of shikimate-3-phosphate (S3P) to produce enolpyruvyl shikimate-3-phosphate and inorganic phosphate. In Streptococcus uberis (strain ATCC BAA-854 / 0140J), this protein is 3-phosphoshikimate 1-carboxyvinyltransferase.